A 150-amino-acid polypeptide reads, in one-letter code: MINSSRINLNSYFCSIFIVSIVVISLICSEALQIQEAKEPIRGHLTRVTIQNDNDYLLGIHCKSRDDDLGFHILAKGELFGWKFHVNFCYSTLYFCGFSQGQMKKGVFEIYRANRDFYRCANCTWKAEKDGIYGYSEDPVKGYLFYNWLK.

Asn-122 carries N-linked (GlcNAc...) asparagine glycosylation.

Belongs to the plant self-incompatibility (S1) protein family.

The protein localises to the secreted. The protein is S-protein homolog 24 of Arabidopsis thaliana (Mouse-ear cress).